A 333-amino-acid polypeptide reads, in one-letter code: Glycerol-3-phosphate dehydrogenase [NAD(P)+] (333 aa).

Positions 10, 11, and 105 each coordinate NADPH. Sn-glycerol 3-phosphate contacts are provided by Lys-105, Gly-136, and Thr-138. Ala-140 serves as a coordination point for NADPH. Positions 191, 244, 254, 255, and 256 each coordinate sn-glycerol 3-phosphate. Lys-191 (proton acceptor) is an active-site residue. Arg-255 is an NADPH binding site. Residues Val-279 and Glu-281 each contribute to the NADPH site.

Belongs to the NAD-dependent glycerol-3-phosphate dehydrogenase family.

It is found in the cytoplasm. The enzyme catalyses sn-glycerol 3-phosphate + NAD(+) = dihydroxyacetone phosphate + NADH + H(+). It carries out the reaction sn-glycerol 3-phosphate + NADP(+) = dihydroxyacetone phosphate + NADPH + H(+). Its pathway is membrane lipid metabolism; glycerophospholipid metabolism. Catalyzes the reduction of the glycolytic intermediate dihydroxyacetone phosphate (DHAP) to sn-glycerol 3-phosphate (G3P), the key precursor for phospholipid synthesis. This is Glycerol-3-phosphate dehydrogenase [NAD(P)+] from Syntrophotalea carbinolica (strain DSM 2380 / NBRC 103641 / GraBd1) (Pelobacter carbinolicus).